We begin with the raw amino-acid sequence, 56 residues long: Large ribosomal subunit protein bL33 (56 aa).

It belongs to the bacterial ribosomal protein bL33 family.

In Vibrio vulnificus (strain YJ016), this protein is Large ribosomal subunit protein bL33.